The primary structure comprises 348 residues: Phosphate acyltransferase (348 aa).

Belongs to the PlsX family. In terms of assembly, homodimer. Probably interacts with PlsY.

It localises to the cytoplasm. It catalyses the reaction a fatty acyl-[ACP] + phosphate = an acyl phosphate + holo-[ACP]. Its pathway is lipid metabolism; phospholipid metabolism. Functionally, catalyzes the reversible formation of acyl-phosphate (acyl-PO(4)) from acyl-[acyl-carrier-protein] (acyl-ACP). This enzyme utilizes acyl-ACP as fatty acyl donor, but not acyl-CoA. The protein is Phosphate acyltransferase of Rhizobium rhizogenes (strain K84 / ATCC BAA-868) (Agrobacterium radiobacter).